Reading from the N-terminus, the 873-residue chain is Outer membrane usher protein FimC (873 aa).

An N-terminal signal peptide occupies residues 1-15 (MKQIPLILAMSLAFA). C815 and C838 are disulfide-bonded.

The protein belongs to the fimbrial export usher family.

It is found in the cell outer membrane. In terms of biological role, probable porin-like protein necessary for the assembly of a pilin-type protein. The chain is Outer membrane usher protein FimC (fimC) from Bordetella pertussis (strain Tohama I / ATCC BAA-589 / NCTC 13251).